Here is a 392-residue protein sequence, read N- to C-terminus: 1-deoxy-D-xylulose 5-phosphate reductoisomerase (392 aa).

NADPH contacts are provided by Thr14, Gly15, Ser16, Ile17, Gly40, Gln43, and Asn126. Position 127 (Lys127) interacts with 1-deoxy-D-xylulose 5-phosphate. NADPH is bound at residue Glu128. Asp150 serves as a coordination point for Mn(2+). 1-deoxy-D-xylulose 5-phosphate is bound by residues Ser151, Glu152, Ser176, and His199. Glu152 provides a ligand contact to Mn(2+). Gly205 contacts NADPH. The 1-deoxy-D-xylulose 5-phosphate site is built by Ser212, Asn217, Lys218, and Glu221. Glu221 contacts Mn(2+).

It belongs to the DXR family. It depends on Mg(2+) as a cofactor. The cofactor is Mn(2+).

It carries out the reaction 2-C-methyl-D-erythritol 4-phosphate + NADP(+) = 1-deoxy-D-xylulose 5-phosphate + NADPH + H(+). Its pathway is isoprenoid biosynthesis; isopentenyl diphosphate biosynthesis via DXP pathway; isopentenyl diphosphate from 1-deoxy-D-xylulose 5-phosphate: step 1/6. In terms of biological role, catalyzes the NADPH-dependent rearrangement and reduction of 1-deoxy-D-xylulose-5-phosphate (DXP) to 2-C-methyl-D-erythritol 4-phosphate (MEP). This is 1-deoxy-D-xylulose 5-phosphate reductoisomerase from Corynebacterium glutamicum (strain ATCC 13032 / DSM 20300 / JCM 1318 / BCRC 11384 / CCUG 27702 / LMG 3730 / NBRC 12168 / NCIMB 10025 / NRRL B-2784 / 534).